Consider the following 330-residue polypeptide: Beta-ketoacyl-[acyl-carrier-protein] synthase III (330 aa).

Residues cysteine 115 and histidine 255 contribute to the active site. The interval 256–260 (QANFR) is ACP-binding. Residue asparagine 285 is part of the active site.

This sequence belongs to the thiolase-like superfamily. FabH family. As to quaternary structure, homodimer.

The protein resides in the cytoplasm. It carries out the reaction malonyl-[ACP] + acetyl-CoA + H(+) = 3-oxobutanoyl-[ACP] + CO2 + CoA. It functions in the pathway lipid metabolism; fatty acid biosynthesis. Functionally, catalyzes the condensation reaction of fatty acid synthesis by the addition to an acyl acceptor of two carbons from malonyl-ACP. Catalyzes the first condensation reaction which initiates fatty acid synthesis and may therefore play a role in governing the total rate of fatty acid production. Possesses both acetoacetyl-ACP synthase and acetyl transacylase activities. Its substrate specificity determines the biosynthesis of branched-chain and/or straight-chain of fatty acids. This is Beta-ketoacyl-[acyl-carrier-protein] synthase III from Helicobacter pylori (strain P12).